A 471-amino-acid chain; its full sequence is Putative multidrug resistance protein MdtD (471 aa).

Helical transmembrane passes span Leu-12–Ala-32, Met-49–Ala-69, Ile-77–Thr-97, Val-106–Ile-126, Phe-138–Val-158, Trp-165–Met-185, Phe-197–Tyr-217, Ala-225–Ala-245, Phe-263–Pro-285, Ile-290–Gly-312, Leu-342–Phe-362, Met-396–Phe-416, and Ile-431–Ala-451.

This sequence belongs to the major facilitator superfamily. TCR/Tet family.

Its subcellular location is the cell inner membrane. The chain is Putative multidrug resistance protein MdtD from Cronobacter sakazakii (strain ATCC BAA-894) (Enterobacter sakazakii).